The chain runs to 92 residues: DNA-binding protein HU 1 (92 aa).

Threonine 4 is modified (phosphothreonine).

The protein belongs to the bacterial histone-like protein family. As to quaternary structure, homodimer. (Microbial infection) Interacts with Bacillus phage SP01 Gp46; the interaction replaces dsDNA from the hbs-DNA complex.

Its subcellular location is the cytoplasm. It localises to the nucleoid. Histone-like DNA-binding protein which introduces negative supercoils in relaxed plasmid DNA in the presence of topoisomerase I. There are at least 20,000 monomers/cell. Capable of wrapping DNA to stabilize it, and thus to prevent its denaturation under extreme environmental conditions. Binds evenly across chromosome, does not display a preference for AT content. Binds ss- and dsDNA in a sequence non-specific manner; 8 nucleotides are sufficient to bind protein. The chain is DNA-binding protein HU 1 from Bacillus subtilis (strain 168).